The following is a 305-amino-acid chain: Maximins-S type B/C (305 aa).

Residues 1–18 (MNFNYFILVLFFITSGHA) form the signal peptide. Propeptides lie at residues 19-35 (KSETREVHQEAENHIKR) and 52-65 (SAEEQNLAEHLVTR). An Asparagine amide modification is found at asparagine 83. The propeptide occupies 87–100 (SAEEQDLAEHLVTR). The residue at position 118 (asparagine 118) is an Asparagine amide. Positions 122–135 (SAEEQDLAEDLVTR) are excised as a propeptide. Lysine 153 is modified (lysine amide). A propeptide spanning residues 157 to 170 (SAEDQDLAEDLVTR) is cleaved from the precursor. An Asparagine amide modification is found at asparagine 188. The propeptide occupies 192–205 (SAEEQDLAEHLVTR). At asparagine 223 the chain carries Asparagine amide. Positions 227-240 (SAEEQDLSEDLVTR) are excised as a propeptide. At asparagine 258 the chain carries Asparagine amide. The propeptide occupies 262-275 (SAEEQDLVEDLVTR). Lysine amide is present on lysine 293. The propeptide occupies 297 to 305 (SAEQEKDMK).

This sequence belongs to the maximin-S family. In terms of tissue distribution, expressed by the skin dorsal glands.

The protein localises to the secreted. In terms of biological role, maximin-S1 has no antimicrobial activity. Has no hemolytic activity. Its function is as follows. Maximin-S2 has an activity against mycoplasma but has no activity against common Gram-positive and Gram-negative bacteria nor fungi. Has no hemolytic activity. Maximin-S3 has an activity against mycoplasma but has no activity against common Gram-positive and Gram-negative bacteria nor fungi. Has no hemolytic activity. Functionally, maximin-S4 has an activity against mycoplasma but has no activity against common Gram-positive and Gram-negative bacteria nor fungi. Has no hemolytic activity. In terms of biological role, maximin-S5 has an activity against mycoplasma but has no activity against common Gram-positive and Gram-negative bacteria nor fungi. Has no hemolytic activity. The protein is Maximins-S type B/C of Bombina maxima (Giant fire-bellied toad).